Consider the following 167-residue polypeptide: MIRIGHGFDVHAFGQDRPLMICGVAVPYHTGFIAHSDGDVALHALSDALIGAAALGDIGKLFPDTDMQYKNADSRKLLIEAYRQVQATGYVVGNVDVTIIAQAPKMRPYIDQMRQVIADDLNCDISCVNVKATTTEKLGFTGRGEGIACEAVALLIKPALCSSYRNI.

The a divalent metal cation site is built by aspartate 9 and histidine 11. 4-CDP-2-C-methyl-D-erythritol 2-phosphate is bound by residues 9–11 (DVH) and 35–36 (HS). Histidine 43 contacts a divalent metal cation. 4-CDP-2-C-methyl-D-erythritol 2-phosphate contacts are provided by residues 57–59 (DIG), 62–66 (FPDTD), 133–136 (TTTE), phenylalanine 140, and arginine 143.

This sequence belongs to the IspF family. As to quaternary structure, homotrimer. A divalent metal cation serves as cofactor.

It catalyses the reaction 4-CDP-2-C-methyl-D-erythritol 2-phosphate = 2-C-methyl-D-erythritol 2,4-cyclic diphosphate + CMP. The protein operates within isoprenoid biosynthesis; isopentenyl diphosphate biosynthesis via DXP pathway; isopentenyl diphosphate from 1-deoxy-D-xylulose 5-phosphate: step 4/6. Its function is as follows. Involved in the biosynthesis of isopentenyl diphosphate (IPP) and dimethylallyl diphosphate (DMAPP), two major building blocks of isoprenoid compounds. Catalyzes the conversion of 4-diphosphocytidyl-2-C-methyl-D-erythritol 2-phosphate (CDP-ME2P) to 2-C-methyl-D-erythritol 2,4-cyclodiphosphate (ME-CPP) with a corresponding release of cytidine 5-monophosphate (CMP). This chain is 2-C-methyl-D-erythritol 2,4-cyclodiphosphate synthase, found in Glaesserella parasuis serovar 5 (strain SH0165) (Haemophilus parasuis).